Here is a 462-residue protein sequence, read N- to C-terminus: tRNA modification GTPase MnmE (462 aa).

(6S)-5-formyl-5,6,7,8-tetrahydrofolate contacts are provided by Arg27, Glu89, and Arg128. Residues 224–383 (GLATAIVGRP…LEAQIAKLFF (160 aa)) form the TrmE-type G domain. Asn234 provides a ligand contact to K(+). Residues 234–239 (NVGKSS), 253–259 (TDVAGTT), and 278–281 (DTAG) contribute to the GTP site. Residue Ser238 coordinates Mg(2+). K(+) contacts are provided by Thr253, Val255, and Thr258. A Mg(2+)-binding site is contributed by Thr259. Lys462 provides a ligand contact to (6S)-5-formyl-5,6,7,8-tetrahydrofolate.

Belongs to the TRAFAC class TrmE-Era-EngA-EngB-Septin-like GTPase superfamily. TrmE GTPase family. As to quaternary structure, homodimer. Heterotetramer of two MnmE and two MnmG subunits. K(+) serves as cofactor.

Its subcellular location is the cytoplasm. Exhibits a very high intrinsic GTPase hydrolysis rate. Involved in the addition of a carboxymethylaminomethyl (cmnm) group at the wobble position (U34) of certain tRNAs, forming tRNA-cmnm(5)s(2)U34. The chain is tRNA modification GTPase MnmE from Latilactobacillus sakei subsp. sakei (strain 23K) (Lactobacillus sakei subsp. sakei).